We begin with the raw amino-acid sequence, 500 residues long: NAD(P)H-quinone oxidoreductase chain 4, chloroplastic (500 aa).

Helical transmembrane passes span 4 to 24 (FPWL…MLFL), 35 to 55 (YTIS…CYNF), 87 to 107 (IGTI…AFPV), 134 to 154 (LLLF…LLSM), 167 to 187 (FILY…GISL), 211 to 231 (ILFY…IPLH), 242 to 262 (HYST…YGLV), 272 to 292 (AHSM…IYAA), 305 to 325 (IAYS…SITD), 330 to 350 (GAIL…FLAG), 386 to 406 (LALP…GIIT), 416 to 436 (IFII…LLSM), and 462 to 482 (LFLS…PDFV).

Belongs to the complex I subunit 4 family.

The protein resides in the plastid. The protein localises to the chloroplast thylakoid membrane. It carries out the reaction a plastoquinone + NADH + (n+1) H(+)(in) = a plastoquinol + NAD(+) + n H(+)(out). The enzyme catalyses a plastoquinone + NADPH + (n+1) H(+)(in) = a plastoquinol + NADP(+) + n H(+)(out). This Crucihimalaya wallichii (Rock-cress) protein is NAD(P)H-quinone oxidoreductase chain 4, chloroplastic.